The primary structure comprises 274 residues: Undecaprenyl-diphosphatase 1 (274 aa).

Transmembrane regions (helical) follow at residues 47–67 (QVFL…LYFN), 85–105 (VSMW…GIPF), 113–133 (FYNY…FIMI), 150–170 (ITYT…VFPG), 196–216 (FFLA…KFGL), 225–245 (ILFI…KFLM), and 253–273 (FKAF…YFLI).

This sequence belongs to the UppP family.

The protein localises to the cell membrane. The enzyme catalyses di-trans,octa-cis-undecaprenyl diphosphate + H2O = di-trans,octa-cis-undecaprenyl phosphate + phosphate + H(+). In terms of biological role, catalyzes the dephosphorylation of undecaprenyl diphosphate (UPP). Confers resistance to bacitracin. The protein is Undecaprenyl-diphosphatase 1 of Clostridium acetobutylicum (strain ATCC 824 / DSM 792 / JCM 1419 / IAM 19013 / LMG 5710 / NBRC 13948 / NRRL B-527 / VKM B-1787 / 2291 / W).